Here is a 631-residue protein sequence, read N- to C-terminus: Phosphomethylpyrimidine synthase (631 aa).

Substrate contacts are provided by residues Asn239, Met268, Tyr297, His333, 353–355 (SRG), 394–397 (DGLR), and Glu433. His437 lines the Zn(2+) pocket. Tyr460 contributes to the substrate binding site. His501 contributes to the Zn(2+) binding site. Residues Cys581, Cys584, and Cys589 each contribute to the [4Fe-4S] cluster site.

Belongs to the ThiC family. Homodimer. Requires [4Fe-4S] cluster as cofactor.

It catalyses the reaction 5-amino-1-(5-phospho-beta-D-ribosyl)imidazole + S-adenosyl-L-methionine = 4-amino-2-methyl-5-(phosphooxymethyl)pyrimidine + CO + 5'-deoxyadenosine + formate + L-methionine + 3 H(+). The protein operates within cofactor biosynthesis; thiamine diphosphate biosynthesis. Catalyzes the synthesis of the hydroxymethylpyrimidine phosphate (HMP-P) moiety of thiamine from aminoimidazole ribotide (AIR) in a radical S-adenosyl-L-methionine (SAM)-dependent reaction. This Citrobacter koseri (strain ATCC BAA-895 / CDC 4225-83 / SGSC4696) protein is Phosphomethylpyrimidine synthase.